Here is a 377-residue protein sequence, read N- to C-terminus: UPF0754 membrane protein LMHCC_0318 (377 aa).

The next 2 membrane-spanning stretches (helical) occupy residues 1-21 (MSVL…GAMT) and 357-377 (YLGG…AMWI).

The protein belongs to the UPF0754 family.

Its subcellular location is the cell membrane. The protein is UPF0754 membrane protein LMHCC_0318 of Listeria monocytogenes serotype 4a (strain HCC23).